Reading from the N-terminus, the 209-residue chain is uncharacterized protein (209 aa).

This is an uncharacterized protein from Magallana gigas (Pacific oyster).